A 552-amino-acid chain; its full sequence is Hyaluronan synthase 2 (552 aa).

Over 1-11 (MYCERFICILR) the chain is Cytoplasmic. Residues 12-32 (ILGTTLFGVSLLLGITAAYIV) form a helical membrane-spanning segment. Over 33 to 45 (GYQFIQTDNYYFS) the chain is Extracellular. The chain crosses the membrane as a helical span at residues 46 to 66 (FGLYGAILASHLIIQSLFAYL). Over 67–374 (EHRKMKRSLE…NAMWFHKHHL (308 aa)) the chain is Cytoplasmic. A helical membrane pass occupies residues 375–395 (WMTYEAVITGFFPFFLIATVI). The Extracellular segment spans residues 396–402 (QLFYRGK). Residues 403–423 (IWNILLFLLTVQLVGLIKSSF) traverse the membrane as a helical segment. Over 424–429 (ASFLRG) the chain is Cytoplasmic. The helical transmembrane segment at 430 to 450 (NIVMVFMSLYSVLYMSSLLPA) threads the bilayer. Topologically, residues 451–475 (KMFAIATINKAGWGTSGRKTIVVNF) are extracellular. The helical transmembrane segment at 476–496 (IGLIPVSIWFTILLGRVIFTI) threads the bilayer. Topologically, residues 497–510 (YKESKKPFSESKTT) are cytoplasmic. A helical transmembrane segment spans residues 511–531 (VLVIGTILYACYWVLLLTLYL). The Extracellular portion of the chain corresponds to 532–552 (VLITKCGRRKKEQHYDMVLDV).

It belongs to the NodC/HAS family. As to quaternary structure, homodimer; dimerization promotes enzymatic activity. Mg(2+) is required as a cofactor.

The protein resides in the cell membrane. It is found in the endoplasmic reticulum membrane. It localises to the vesicle. Its subcellular location is the golgi apparatus membrane. The protein localises to the lysosome. The catalysed reaction is [hyaluronan](n) + UDP-N-acetyl-alpha-D-glucosamine = N-acetyl-beta-D-glucosaminyl-(1-&gt;4)-[hyaluronan](n) + UDP + H(+). It catalyses the reaction N-acetyl-beta-D-glucosaminyl-(1-&gt;4)-[hyaluronan](n) + UDP-alpha-D-glucuronate = [hyaluronan](n+1) + UDP + H(+). Its pathway is glycan biosynthesis; hyaluronan biosynthesis. Catalyzes the addition of GlcNAc or GlcUA monosaccharides to the nascent hyaluronan polymer. Therefore, it is essential to hyaluronan synthesis a major component of most extracellular matrices that has a structural role in tissues architectures and regulates cell adhesion, migration and differentiation. This is one of three isoenzymes responsible for cellular hyaluronan synthesis and it is particularly responsible for the synthesis of high molecular mass hyaluronan. The polypeptide is Hyaluronan synthase 2 (HAS2) (Gallus gallus (Chicken)).